The primary structure comprises 269 residues: MATH domain and coiled-coil domain-containing protein At2g01790 (269 aa).

The region spanning 6–134 (AVKKLWVINN…NGEVDIVAEV (129 aa)) is the MATH domain. Residues 228-269 (KLDWLEKKLKETGKSRLQEIEEDLKDLKVKCADMDALLEFLR) are a coiled coil.

The protein is MATH domain and coiled-coil domain-containing protein At2g01790 of Arabidopsis thaliana (Mouse-ear cress).